The sequence spans 158 residues: Transcription elongation factor GreA (158 aa).

Belongs to the GreA/GreB family.

Necessary for efficient RNA polymerase transcription elongation past template-encoded arresting sites. The arresting sites in DNA have the property of trapping a certain fraction of elongating RNA polymerases that pass through, resulting in locked ternary complexes. Cleavage of the nascent transcript by cleavage factors such as GreA or GreB allows the resumption of elongation from the new 3'terminus. GreA releases sequences of 2 to 3 nucleotides. The sequence is that of Transcription elongation factor GreA from Allorhizobium ampelinum (strain ATCC BAA-846 / DSM 112012 / S4) (Agrobacterium vitis (strain S4)).